The primary structure comprises 142 residues: Large ribosomal subunit protein uL22c (142 aa).

The protein belongs to the universal ribosomal protein uL22 family. Part of the 50S ribosomal subunit.

It localises to the plastid. It is found in the chloroplast. This protein binds specifically to 23S rRNA. Functionally, the globular domain of the protein is located near the polypeptide exit tunnel on the outside of the subunit, while an extended beta-hairpin is found that lines the wall of the exit tunnel in the center of the 70S ribosome. This Pinus thunbergii (Japanese black pine) protein is Large ribosomal subunit protein uL22c (rpl22).